A 1209-amino-acid polypeptide reads, in one-letter code: Phospholipid-transporting ATPase ID (1209 aa).

Over 1–68 (MTVPKEIPEK…NIVTFLPVNL (68 aa)) the chain is Cytoplasmic. Positions 12–36 (ARAGAPPSWSQKKPSWGTEEERRAR) are disordered. A helical transmembrane segment spans residues 69 to 89 (FEQFQEVANTYFLFLLILQLI). The Exoplasmic loop portion of the chain corresponds to 90–91 (PQ). A helical transmembrane segment spans residues 92–112 (ISSLSWFTTIVPLVLVLTITA). Over 113–295 (VKDATDDYFR…TSIDRLMNTL (183 aa)) the chain is Cytoplasmic. The chain crosses the membrane as a helical span at residues 296-316 (VLWIFGFLVCMGVILAIGNAI). The Exoplasmic loop segment spans residues 317–338 (WEHEVGTRFQVYLPWDEAVDSA). The chain crosses the membrane as a helical span at residues 339 to 359 (FFSGFLSFWSYIIILNTVVPI). Residues 360–898 (SLYVSVEVIR…KFLCYFFYKN (539 aa)) are Cytoplasmic-facing. Asp411 acts as the 4-aspartylphosphate intermediate in catalysis. Residues Asp411, Lys412, Thr413, Glu515, Phe556, Lys579, Arg613, Thr693, Gly694, Asp695, Arg807, and Lys813 each coordinate ATP. Asp411 serves as a coordination point for Mg(2+). Thr413 is a Mg(2+) binding site. Asp833 is a binding site for Mg(2+). Residues Asn836 and Asp837 each contribute to the ATP site. Position 837 (Asp837) interacts with Mg(2+). The helical transmembrane segment at 899–919 (FAFTMVHFWFGFFCGFSAQTV) threads the bilayer. Residues 920–922 (YDQ) lie on the Exoplasmic loop side of the membrane. The helical transmembrane segment at 923–943 (YFITLYNIVYTSLPVLAMGVF) threads the bilayer. Topologically, residues 944–972 (DQDVPEQRSMEYPKLYEPGQLNLLFNKRE) are cytoplasmic. A helical transmembrane segment spans residues 973-993 (FFICIAQGIYTSVLMFFIPYG). Residues 994–1011 (VFAEATRDDGTQLADYQS) are Exoplasmic loop-facing. A helical transmembrane segment spans residues 1012 to 1032 (FAVTVATSLVIVVSVQIGLDT). At 1033 to 1036 (GYWT) the chain is on the cytoplasmic side. Residues 1037 to 1057 (AINHFFIWGSLAVYFAILFAM) form a helical membrane-spanning segment. Over 1058–1082 (HSNGLFDMFPNQFRFVGNAQNTLAQ) the chain is Exoplasmic loop. The chain crosses the membrane as a helical span at residues 1083–1103 (PTVWLTIALTTAVCIMPVVAF). At 1104–1209 (RFLRLSLKPD…SGGAEKPLKG (106 aa)) the chain is on the cytoplasmic side. At Ser1175 the chain carries Phosphoserine. The segment at 1179-1209 (RSSSSWIESLRRKKSDSANSPSGGAEKPLKG) is disordered.

The protein belongs to the cation transport ATPase (P-type) (TC 3.A.3) family. Type IV subfamily. As to quaternary structure, component of a P4-ATPase flippase complex which consists of a catalytic alpha subunit ATP8B2 and an accessory beta subunit TMEM30A or TMEM30B. It depends on Mg(2+) as a cofactor. As to expression, expressed in brain and testes (at protein level).

It localises to the cell membrane. Its subcellular location is the endoplasmic reticulum membrane. The enzyme catalyses ATP + H2O + phospholipidSide 1 = ADP + phosphate + phospholipidSide 2.. The catalysed reaction is a 1,2-diacyl-sn-glycero-3-phosphocholine(out) + ATP + H2O = a 1,2-diacyl-sn-glycero-3-phosphocholine(in) + ADP + phosphate + H(+). Its function is as follows. Catalytic component of P4-ATPase flippase complex, which catalyzes the hydrolysis of ATP coupled to the transport of phosphatidylcholine (PC) from the outer to the inner leaflet of the plasma membrane. May contribute to the maintenance of membrane lipid asymmetry. The chain is Phospholipid-transporting ATPase ID from Mus musculus (Mouse).